Consider the following 177-residue polypeptide: 3-hydroxyanthranilate 3,4-dioxygenase (177 aa).

Arg-47 serves as a coordination point for O2. Fe cation is bound by residues His-51, Glu-57, and His-95. Residue Glu-57 coordinates substrate. 2 residues coordinate substrate: Arg-99 and Glu-110. Residues Cys-125, Cys-128, Cys-162, and Cys-165 each contribute to the Fe cation site.

The protein belongs to the 3-HAO family. As to quaternary structure, homodimer. Fe(2+) serves as cofactor.

The enzyme catalyses 3-hydroxyanthranilate + O2 = (2Z,4Z)-2-amino-3-carboxymuconate 6-semialdehyde. It functions in the pathway cofactor biosynthesis; NAD(+) biosynthesis; quinolinate from L-kynurenine: step 3/3. Functionally, catalyzes the oxidative ring opening of 3-hydroxyanthranilate to 2-amino-3-carboxymuconate semialdehyde, which spontaneously cyclizes to quinolinate. This is 3-hydroxyanthranilate 3,4-dioxygenase from Burkholderia cenocepacia (strain ATCC BAA-245 / DSM 16553 / LMG 16656 / NCTC 13227 / J2315 / CF5610) (Burkholderia cepacia (strain J2315)).